Consider the following 398-residue polypeptide: Phosphoglycerate kinase (398 aa).

Residues 24–26, arginine 40, 63–66, arginine 122, and arginine 155 each bind substrate; these read DFN and HMGR. ATP contacts are provided by residues lysine 206, glycine 294, glutamate 325, and 354-357; that span reads GGDS.

This sequence belongs to the phosphoglycerate kinase family. In terms of assembly, monomer.

The protein localises to the cytoplasm. The catalysed reaction is (2R)-3-phosphoglycerate + ATP = (2R)-3-phospho-glyceroyl phosphate + ADP. It functions in the pathway carbohydrate degradation; glycolysis; pyruvate from D-glyceraldehyde 3-phosphate: step 2/5. This chain is Phosphoglycerate kinase, found in Picosynechococcus sp. (strain ATCC 27264 / PCC 7002 / PR-6) (Agmenellum quadruplicatum).